A 1850-amino-acid polypeptide reads, in one-letter code: Serine/threonine-protein kinase WNK (1850 aa).

Disordered regions lie at residues M1 to E108, Q221 to K253, and M272 to A309. Composition is skewed to low complexity over residues S16–T26 and P234–N251. Residues D284–A309 show a composition bias toward basic and acidic residues. The 263-residue stretch at L334–F596 folds into the Protein kinase domain. ATP contacts are provided by residues S344, T416 to M419, and K466. D483 acts as the Proton acceptor in catalysis. The stretch at D693–N749 forms a coiled coil. The span at E727–A742 shows a compositional bias: basic and acidic residues. 7 disordered regions span residues E727–P790, T890–S943, E1040–P1130, S1188–I1249, G1588–S1636, A1721–G1740, and I1769–V1850. Residues N751 to A760 are compositionally biased toward pro residues. The segment covering S776–P790 has biased composition (polar residues). Residues T890–T934 show a composition bias toward low complexity. Basic and acidic residues predominate over residues P1062–P1071. Over residues Q1077–S1101 the composition is skewed to polar residues. Positions S1188 to N1207 are enriched in low complexity. The span at M1208–V1217 shows a compositional bias: polar residues. The segment covering P1771–S1805 has biased composition (low complexity). The segment covering Y1806–A1820 has biased composition (polar residues). Low complexity predominate over residues S1821–S1832.

Belongs to the protein kinase superfamily. Ser/Thr protein kinase family. WNK subfamily. Interacts with gck-3 (via C-terminus). Requires Mg(2+) as cofactor. Expressed in pharynx, nervous system, hypodermis, spermatheca, excretory cell and canal and body wall muscles.

The protein localises to the cytoplasm. The enzyme catalyses L-seryl-[protein] + ATP = O-phospho-L-seryl-[protein] + ADP + H(+). It carries out the reaction L-threonyl-[protein] + ATP = O-phospho-L-threonyl-[protein] + ADP + H(+). Its activity is regulated as follows. Activated in response to hyperosmotic stress: cell shrinkage promotes formation of a membraneless compartment that concentrates wnk-1 with its downstrem substrates. Serine/threonine-protein kinase component of the WNK3-SPAK/OSR1 kinase cascade, which plays an important role in the regulation of electrolyte homeostasis and regulatory volume increase in response to hyperosmotic stress. Wnk-1 mediates regulatory volume increase in response to hyperosmotic stress by acting as a molecular crowding sensor, which senses cell shrinkage and mediates formation of a membraneless compartment by undergoing liquid-liquid phase separation. The membraneless compartment concentrates wnk-1 with its substrates. Phosphorylates gck-3. Plays a role in osmotic stress responses during which it increases gpdh-1 translation, likely by phosphorylating gck-3. Essential for larval development and the tubular formation of the excretory canals. The polypeptide is Serine/threonine-protein kinase WNK (Caenorhabditis elegans).